We begin with the raw amino-acid sequence, 223 residues long: MAKAVDESTYEQRVRALYDKQIRMEAREAGVIKKISKFNSNLLDLKEAVVRHHQKVGKVRKVKMLRCGELEKRANFMEELTQELEATKQRNLVMRDQIKQLNVLARQHRNEVMESIHTLSKTTGTYLNHEALPARVKGVTVLRNDNSDQLIPFDLKATDVEGLESLCQHLQGFNIDAFQWRQLVSLATEMSMDSHTTPTTPPKEAAEGKSIIEIDLTSPTSHI.

A coiled-coil region spans residues 65-115 (LRCGELEKRANFMEELTQELEATKQRNLVMRDQIKQLNVLARQHRNEVMES).

The protein belongs to the SPC25 family. In terms of assembly, component of the Ndc80 complex, which is composed of Ndc80, Nuf2 and Spc25.

It is found in the nucleus. The protein localises to the chromosome. The protein resides in the centromere. Its subcellular location is the kinetochore. In terms of biological role, acts as a component of the essential kinetochore-associated Ndc80 complex, which is required for chromosome segregation and spindle checkpoint activity during meiosis and mitosis. Required for kinetochore integrity and the organization of stable microtubule binding sites in the outer plate of the kinetochore. Participates in SAC signaling that responds specifically to disruptions in spindle microtubule dynamics. The NDC80 complex synergistically enhances the affinity of the SKA1 complex for microtubules and may allow the NDC80 complex to track depolymerizing microtubules. This is Kinetochore protein Spc25 from Drosophila lutescens (Fruit fly).